The following is a 382-amino-acid chain: Beta-lactamase CMY-10 (382 aa).

The first 23 residues, 1 to 23, serve as a signal peptide directing secretion; the sequence is MQQRQSILWGAVATLMWAGLAHA. Serine 88 acts as the Acyl-ester intermediate in catalysis. Serine 88 contributes to the AMP binding site. GMP is bound by residues serine 88, glutamine 144, tyrosine 174, threonine 336, serine 338, and asparagine 363. IMP-binding residues include serine 88, glutamine 144, tyrosine 174, threonine 336, serine 338, and asparagine 363. Tyrosine 174 is a binding site for AMP. Position 338 (serine 338) interacts with AMP.

The protein belongs to the class-C beta-lactamase family. Monomer.

The catalysed reaction is a beta-lactam + H2O = a substituted beta-amino acid. Inhibited by various nucleotides in vitro, including adenosine 5'-(P-acetyl)monophosphate (acAMP), inosine-5'-monophosphate (IMP) and guanosine-5'-monophosphate (GMP); IMP and GMP exhibit strongest competitive inhibition. Inhibited by the beta-lactamase-blocking agent, avibactam. Inhibited by clavulanic acid. Weakly inhibited by citric acid. Functionally, class C beta-lactamase which confers resistance to penicillins and cephalosporins. Has benzylpenicillin-, ceftazidime-, nitrocefin- and imipenem-hydrolyzing activity. This Klebsiella aerogenes (Enterobacter aerogenes) protein is Beta-lactamase CMY-10.